Consider the following 207-residue polypeptide: N-(5'-phosphoribosyl)anthranilate isomerase (207 aa).

It belongs to the TrpF family.

The enzyme catalyses N-(5-phospho-beta-D-ribosyl)anthranilate = 1-(2-carboxyphenylamino)-1-deoxy-D-ribulose 5-phosphate. It participates in amino-acid biosynthesis; L-tryptophan biosynthesis; L-tryptophan from chorismate: step 3/5. This is N-(5'-phosphoribosyl)anthranilate isomerase from Halorhodospira halophila (strain DSM 244 / SL1) (Ectothiorhodospira halophila (strain DSM 244 / SL1)).